We begin with the raw amino-acid sequence, 214 residues long: Pyridoxine/pyridoxamine 5'-phosphate oxidase (214 aa).

Substrate contacts are provided by residues R8 to Y11 and K66. Residues R61 to K66, F76 to T77, R82, K83, and Q105 each bind FMN. 3 residues coordinate substrate: Y123, R127, and S131. FMN contacts are provided by residues Q140 to S141 and W184. R190–H192 lines the substrate pocket. R194 is an FMN binding site.

The protein belongs to the pyridoxamine 5'-phosphate oxidase family. In terms of assembly, homodimer. Requires FMN as cofactor.

It catalyses the reaction pyridoxamine 5'-phosphate + O2 + H2O = pyridoxal 5'-phosphate + H2O2 + NH4(+). It carries out the reaction pyridoxine 5'-phosphate + O2 = pyridoxal 5'-phosphate + H2O2. Its pathway is cofactor metabolism; pyridoxal 5'-phosphate salvage; pyridoxal 5'-phosphate from pyridoxamine 5'-phosphate: step 1/1. It participates in cofactor metabolism; pyridoxal 5'-phosphate salvage; pyridoxal 5'-phosphate from pyridoxine 5'-phosphate: step 1/1. Functionally, catalyzes the oxidation of either pyridoxine 5'-phosphate (PNP) or pyridoxamine 5'-phosphate (PMP) into pyridoxal 5'-phosphate (PLP). The sequence is that of Pyridoxine/pyridoxamine 5'-phosphate oxidase from Burkholderia orbicola (strain MC0-3).